The sequence spans 506 residues: Anaerobic nitric oxide reductase transcription regulator NorR (506 aa).

4-aspartylphosphate is present on aspartate 57. The Sigma-54 factor interaction domain occupies 187–416 (MIGLSPAMTQ…LEHAIHRAVV (230 aa)). Residues 215–222 (GETGTGKE) and 278–287 (ADNGTLFLDE) contribute to the ATP site. Positions 481–500 (WAASARALETDVANLHRLAK) form a DNA-binding region, H-T-H motif.

Its pathway is nitrogen metabolism; nitric oxide reduction. In terms of biological role, required for the expression of anaerobic nitric oxide (NO) reductase, acts as a transcriptional activator for at least the norVW operon. Activation also requires sigma-54. In Salmonella newport (strain SL254), this protein is Anaerobic nitric oxide reductase transcription regulator NorR.